A 215-amino-acid chain; its full sequence is MNIEFSNIEARVIGCLMEKELTTPDLYPLTLNSLTNACNQKSNRDPVMLLSEAEVLDAVDALIEKRLINDESGFHGRVTKYRHRFCNTEFGNFQFTGQEKGIICCMLLRGAQTPGELRTRSHRLCQFIDVKEVENVLDKLVQDSLVVKLPREAGKRDSRYMHQFSGEVDLAEVPLTVAPVSEVVQGDDRIEQLEKDLSALKNEVSELRYLIEQRL.

This sequence belongs to the UPF0502 family.

The sequence is that of UPF0502 protein Ping_1905 from Psychromonas ingrahamii (strain DSM 17664 / CCUG 51855 / 37).